Consider the following 75-residue polypeptide: MKELVEIIAKSLVDKPEDVHVNEVLGEESIILELKVSPEDMGKVIGKQGRIAKAIRTVVKAAAIKENKKVVVEII.

A KH domain is found at 29-75 (SIILELKVSPEDMGKVIGKQGRIAKAIRTVVKAAAIKENKKVVVEII).

It belongs to the KhpA RNA-binding protein family. As to quaternary structure, forms a complex with KhpB.

Its subcellular location is the cytoplasm. Functionally, a probable RNA chaperone. Forms a complex with KhpB which binds to cellular RNA and controls its expression. Plays a role in peptidoglycan (PG) homeostasis and cell length regulation. In Clostridium perfringens (strain 13 / Type A), this protein is RNA-binding protein KhpA.